We begin with the raw amino-acid sequence, 127 residues long: Putative lipoprotein LprJ (127 aa).

A signal peptide spans 1–34 (MTAHTHDGTRTWRTGRQATTLLALLAGVFGGAAS). A lipid anchor (N-palmitoyl cysteine) is attached at cysteine 35. The S-diacylglycerol cysteine moiety is linked to residue cysteine 35. The Extracellular segment spans residues 35–99 (CAAPIQADMM…MAEINGMSRD (65 aa)). A helical transmembrane segment spans residues 100–120 (MASTFTIVAIGTYCPAVIAPL). Topologically, residues 121 to 127 (MPNRLQA) are cytoplasmic.

May interact with sensor protein KdpD. In terms of processing, modified by Lgt on Cys-35 with an S-linked diacylglycerol, signal peptide is removed by LspA, modified by Lnt with amide-linked fatty acid.

It is found in the cell membrane. Its function is as follows. Overexpression induces expression of sensor protein kdpD gene at low K(+) concentrations (0 and 250 uM, tested in M.smegatis). This chain is Putative lipoprotein LprJ (lprJ), found in Mycobacterium tuberculosis (strain ATCC 25618 / H37Rv).